Here is a 546-residue protein sequence, read N- to C-terminus: Probable sucrose-6-phosphate hydrolase (546 aa).

Substrate-binding positions include 105 to 108 (LLND), Q124, 167 to 168 (FS), 228 to 229 (RD), and E283. Residue D108 is part of the active site.

The protein belongs to the glycosyl hydrolase 32 family.

It is found in the cytoplasm. The enzyme catalyses Hydrolysis of terminal non-reducing beta-D-fructofuranoside residues in beta-D-fructofuranosides.. It functions in the pathway glycan biosynthesis; sucrose metabolism. In terms of biological role, enables the bacterium to metabolize sucrose as a sole carbon source. This Vibrio cholerae serotype O1 (strain ATCC 39541 / Classical Ogawa 395 / O395) protein is Probable sucrose-6-phosphate hydrolase (cscA).